A 320-amino-acid chain; its full sequence is Bifunctional protein FolD 2 (320 aa).

Residues 173–175 (GRS) and I242 each bind NADP(+).

It belongs to the tetrahydrofolate dehydrogenase/cyclohydrolase family. In terms of assembly, homodimer.

It carries out the reaction (6R)-5,10-methylene-5,6,7,8-tetrahydrofolate + NADP(+) = (6R)-5,10-methenyltetrahydrofolate + NADPH. The enzyme catalyses (6R)-5,10-methenyltetrahydrofolate + H2O = (6R)-10-formyltetrahydrofolate + H(+). Its pathway is one-carbon metabolism; tetrahydrofolate interconversion. Its function is as follows. Catalyzes the oxidation of 5,10-methylenetetrahydrofolate to 5,10-methenyltetrahydrofolate and then the hydrolysis of 5,10-methenyltetrahydrofolate to 10-formyltetrahydrofolate. The chain is Bifunctional protein FolD 2 from Rubrobacter xylanophilus (strain DSM 9941 / JCM 11954 / NBRC 16129 / PRD-1).